The following is a 197-amino-acid chain: Adenylate kinase (197 aa).

16–21 lines the ATP pocket; the sequence is GAGKGT. Residues 36 to 65 form an NMP region; sequence STGDILRDHVARGTELGQQVKPILDAGHLV. AMP is bound by residues Thr-37, Arg-42, 63-65, 90-93, and Gln-97; these read HLV and GFPR. Positions 131-147 are LID; the sequence is ERGNQAQARGEAVRSDD. Arg-132 serves as a coordination point for ATP. The AMP site is built by Arg-144 and Arg-155. Gly-183 is a binding site for ATP.

The protein belongs to the adenylate kinase family. In terms of assembly, monomer.

The protein localises to the cytoplasm. It catalyses the reaction AMP + ATP = 2 ADP. The protein operates within purine metabolism; AMP biosynthesis via salvage pathway; AMP from ADP: step 1/1. In terms of biological role, catalyzes the reversible transfer of the terminal phosphate group between ATP and AMP. Plays an important role in cellular energy homeostasis and in adenine nucleotide metabolism. The protein is Adenylate kinase of Deinococcus deserti (strain DSM 17065 / CIP 109153 / LMG 22923 / VCD115).